Here is a 156-residue protein sequence, read N- to C-terminus: MSRRHSAEKREVNPDPKFGNIVISKFMNSIMYDGKKSVAENIVYGALDTIEAKTKQSPLSVFEQALENVMPTIEVRSRRVGGATYQVPVEVRSTRRQALGIRWIIAAARGRNEKTMTERLSAELLDASNNRGNAVKKREDVHKMAEANRAFSHYRW.

The protein belongs to the universal ribosomal protein uS7 family. Part of the 30S ribosomal subunit. Contacts proteins S9 and S11.

In terms of biological role, one of the primary rRNA binding proteins, it binds directly to 16S rRNA where it nucleates assembly of the head domain of the 30S subunit. Is located at the subunit interface close to the decoding center, probably blocks exit of the E-site tRNA. The protein is Small ribosomal subunit protein uS7 of Afipia carboxidovorans (strain ATCC 49405 / DSM 1227 / KCTC 32145 / OM5) (Oligotropha carboxidovorans).